We begin with the raw amino-acid sequence, 382 residues long: MSTYTRPVMLLLCGLLLLTLAIAVLNTLVPLWLAQANLPTWQVGMVSSSYFTGNLVGTLFTGYLIKRIGFNRSYYLASLIFAAGCVGLGVMVGFWSWMSWRFIAGIGCAMIWVVVESALMCSGTSHNRGRLLAAYMMVYYMGTFLGQLLVSKVSGELLHVLPWVTGMILAGILPLLFTRIVNQQTQTRHSSSISAMLKLRQARLGVNGCIISGIVLGSLYGLMPLYLKHQGMANASIGFWMAVLVSAGILGQWPMGRLADKFGRLLVLRVQVFVVILGSIAMLTQAAMAPALFILGAAGFTLYPVAMAWACEKVEHHQLVAMNQALLLSYTVGSLLGPSFAAMLMQNYSDNLLFIMIASVSFIYLLMLLRNAGQTPNPVAHI.

12 helical membrane passes run 8 to 28 (VMLL…LNTL), 45 to 65 (MVSS…GYLI), 75 to 95 (YLAS…VGFW), 102 to 122 (FIAG…LMCS), 131 to 151 (LLAA…LLVS), 157 to 177 (LLHV…PLLF), 204 to 224 (LGVN…GLMP), 231 to 251 (GMAN…GILG), 270 to 290 (VQVF…AMAP), 291 to 311 (ALFI…AWAC), 325 to 345 (ALLL…AMLM), and 349 to 369 (SDNL…LMLL).

Belongs to the major facilitator superfamily. YcaD (TC 2.A.1.26) family.

The protein localises to the cell inner membrane. This is an uncharacterized protein from Salmonella agona (strain SL483).